The sequence spans 609 residues: Non-structural glycoprotein (609 aa).

The N-terminal stretch at 1–24 (MDFLRQCTLIQVMILAITIRLTHG) is a signal peptide. At 25-581 (GWTNFPESCV…EKDYWHEEYN (557 aa)) the chain is on the extracellular side. N-linked (GlcNAc...) asparagine; by host glycosylation is found at N87, N375, N465, N472, N478, N506, N529, N551, and N562. The chain crosses the membrane as a helical span at residues 582–599 (MWGLSGLSFLLLLALFYN). Over 600-609 (KIKRKIKRKS) the chain is Cytoplasmic.

The protein belongs to the ephemerovirus glycoprotein family.

It is found in the membrane. The chain is Non-structural glycoprotein (GNS) from Adelaide River virus (ARV).